The primary structure comprises 599 residues: DNA topoisomerase 4 subunit B (599 aa).

ATP-binding positions include Y6, N51, D77, 110-116, and K311; that span reads GLNGVGT. A Toprim domain is found at 397 to 507; sequence TMIFLTEGDS…NGHMYILETP (111 aa). Mg(2+)-binding residues include E403, D472, and D474.

The protein belongs to the type II topoisomerase family. Heterotetramer composed of ParC and ParE. The cofactor is Mg(2+). Mn(2+) is required as a cofactor. Requires Ca(2+) as cofactor.

It carries out the reaction ATP-dependent breakage, passage and rejoining of double-stranded DNA.. Functionally, topoisomerase IV is essential for chromosome segregation. It relaxes supercoiled DNA. Performs the decatenation events required during the replication of a circular DNA molecule. The protein is DNA topoisomerase 4 subunit B (parE) of Borreliella burgdorferi (strain ATCC 35210 / DSM 4680 / CIP 102532 / B31) (Borrelia burgdorferi).